A 139-amino-acid polypeptide reads, in one-letter code: Phosphoribosyl-AMP cyclohydrolase (139 aa).

D91 serves as a coordination point for Mg(2+). C92 provides a ligand contact to Zn(2+). Residues D93 and D95 each contribute to the Mg(2+) site. The Zn(2+) site is built by C110 and C117.

The protein belongs to the PRA-CH family. Homodimer. Mg(2+) serves as cofactor. Requires Zn(2+) as cofactor.

Its subcellular location is the cytoplasm. The enzyme catalyses 1-(5-phospho-beta-D-ribosyl)-5'-AMP + H2O = 1-(5-phospho-beta-D-ribosyl)-5-[(5-phospho-beta-D-ribosylamino)methylideneamino]imidazole-4-carboxamide. It functions in the pathway amino-acid biosynthesis; L-histidine biosynthesis; L-histidine from 5-phospho-alpha-D-ribose 1-diphosphate: step 3/9. In terms of biological role, catalyzes the hydrolysis of the adenine ring of phosphoribosyl-AMP. This chain is Phosphoribosyl-AMP cyclohydrolase, found in Brucella abortus (strain S19).